A 266-amino-acid polypeptide reads, in one-letter code: GTP cyclohydrolase III (266 aa).

This sequence belongs to the archaeal-type GTP cyclohydrolase family.

The catalysed reaction is GTP + 3 H2O = 2-amino-5-formylamino-6-(5-phospho-D-ribosylamino)pyrimidin-4(3H)-one + 2 phosphate + 2 H(+). Catalyzes the formation of 2-amino-5-formylamino-6-ribofuranosylamino-4(3H)-pyrimidinone ribonucleotide monophosphate and inorganic phosphate from GTP. Also has an independent pyrophosphate phosphohydrolase activity. This Methanococcus maripaludis (strain C5 / ATCC BAA-1333) protein is GTP cyclohydrolase III.